Here is a 262-residue protein sequence, read N- to C-terminus: Ribosomal RNA small subunit methyltransferase A (262 aa).

S-adenosyl-L-methionine contacts are provided by H13, L15, G40, E61, D85, and N103.

Belongs to the class I-like SAM-binding methyltransferase superfamily. rRNA adenine N(6)-methyltransferase family. RsmA subfamily.

The protein localises to the cytoplasm. The enzyme catalyses adenosine(1518)/adenosine(1519) in 16S rRNA + 4 S-adenosyl-L-methionine = N(6)-dimethyladenosine(1518)/N(6)-dimethyladenosine(1519) in 16S rRNA + 4 S-adenosyl-L-homocysteine + 4 H(+). Its function is as follows. Specifically dimethylates two adjacent adenosines (A1518 and A1519) in the loop of a conserved hairpin near the 3'-end of 16S rRNA in the 30S particle. May play a critical role in biogenesis of 30S subunits. The polypeptide is Ribosomal RNA small subunit methyltransferase A (Bordetella petrii (strain ATCC BAA-461 / DSM 12804 / CCUG 43448)).